The primary structure comprises 148 residues: UPF0756 membrane protein YeaL (148 aa).

The next 4 helical transmembrane spans lie at 14–34 (ALGFISHNTTVAVSILVLIIV), 51–71 (LSIGIIILTIGIMAPIASGTL), 86–106 (LVAIAVGVIVSWLGGRGVTLM), and 121–141 (VLGVALFRGVPVGPLIAAGLV).

Belongs to the UPF0756 family.

The protein resides in the cell membrane. The sequence is that of UPF0756 membrane protein YeaL from Escherichia coli O127:H6 (strain E2348/69 / EPEC).